We begin with the raw amino-acid sequence, 605 residues long: DNA mismatch repair protein MutL (605 aa).

The protein belongs to the DNA mismatch repair MutL/HexB family.

Its function is as follows. This protein is involved in the repair of mismatches in DNA. It is required for dam-dependent methyl-directed DNA mismatch repair. May act as a 'molecular matchmaker', a protein that promotes the formation of a stable complex between two or more DNA-binding proteins in an ATP-dependent manner without itself being part of a final effector complex. The polypeptide is DNA mismatch repair protein MutL (Rhizobium meliloti (strain 1021) (Ensifer meliloti)).